Here is a 150-residue protein sequence, read N- to C-terminus: D-aminoacyl-tRNA deacylase (150 aa).

Positions 138–139 (GP) match the Gly-cisPro motif, important for rejection of L-amino acids motif.

The protein belongs to the DTD family. As to quaternary structure, homodimer.

Its subcellular location is the cytoplasm. It carries out the reaction glycyl-tRNA(Ala) + H2O = tRNA(Ala) + glycine + H(+). The enzyme catalyses a D-aminoacyl-tRNA + H2O = a tRNA + a D-alpha-amino acid + H(+). An aminoacyl-tRNA editing enzyme that deacylates mischarged D-aminoacyl-tRNAs. Also deacylates mischarged glycyl-tRNA(Ala), protecting cells against glycine mischarging by AlaRS. Acts via tRNA-based rather than protein-based catalysis; rejects L-amino acids rather than detecting D-amino acids in the active site. By recycling D-aminoacyl-tRNA to D-amino acids and free tRNA molecules, this enzyme counteracts the toxicity associated with the formation of D-aminoacyl-tRNA entities in vivo and helps enforce protein L-homochirality. The sequence is that of D-aminoacyl-tRNA deacylase from Chlorobaculum tepidum (strain ATCC 49652 / DSM 12025 / NBRC 103806 / TLS) (Chlorobium tepidum).